Here is a 283-residue protein sequence, read N- to C-terminus: Non-selective voltage-gated ion channel VDAC3 (283 aa).

Position 2 is an N-acetylcysteine (Cys-2). Thr-4 carries the phosphothreonine modification. Residues Lys-12, Lys-15, and Lys-20 each carry the N6-acetyllysine modification. Beta stranded transmembrane passes span 26-35 (MVKIDLRTKS) and 39-47 (VEFSTSGHA). Lys-53 participates in a covalent cross-link: Glycyl lysine isopeptide (Lys-Gly) (interchain with G-Cter in ubiquitin). The next 3 beta stranded transmembrane spans lie at 54–64 (ASGNLETKYKV), 69–76 (LTFTQKWN), and 80–89 (TLGTEISLEN). Lys-90 is modified (N6-acetyllysine). The beta stranded transmembrane segment at 95–104 (LKLTLDTIFV) threads the bilayer. Residues Lys-109 and Lys-110 each participate in a glycyl lysine isopeptide (Lys-Gly) (interchain with G-Cter in ubiquitin) cross-link. Beta stranded transmembrane passes span 111–120 (SGKLKASYKR), 123–130 (FSLGSNVD), 137–145 (TIYGWAVLA), 150–158 (LAGYQMSFD), 163–175 (KLSQNNFALGYKA), 178–185 (FQLHTHVN), 189–198 (EFGGSIYQKV), 202–211 (IETSINLAWT), 218–227 (RFGIAAKYKL), and 231–238 (TSLSAKVN). The residue at position 241 (Ser-241) is a Phosphoserine. NAD(+) is bound by residues 242–244 (LIG) and 260–264 (SALID). 2 beta stranded membrane-spanning segments follow: residues 242 to 251 (LIGLGYTQTL) and 254 to 263 (GVKLTLSALI). N6-acetyllysine; alternate is present on Lys-266. A Glycyl lysine isopeptide (Lys-Gly) (interchain with G-Cter in ubiquitin); alternate cross-link involves residue Lys-266. A beta stranded transmembrane segment spans residues 273–282 (HKVGLGFELE).

Belongs to the eukaryotic mitochondrial porin family. As to quaternary structure, interacts with ARMC12 in a TBC1D21-dependent manner. Interacts with MISFA. Ubiquitinated by PRKN during mitophagy, leading to its degradation and enhancement of mitophagy. Deubiquitinated by USP30.

Its subcellular location is the mitochondrion outer membrane. The protein resides in the membrane. The enzyme catalyses chloride(in) = chloride(out). It carries out the reaction K(+)(in) = K(+)(out). Its function is as follows. Non-selective voltage-gated ion channel that mediates the transport of anions and cations through the mitochondrion outer membrane and plasma membrane. Forms a high-conducting channel with a stable open state and a voltage-induced closure with a mild preference for anions over cations. Involved in male fertility and sperm mitochondrial sheath formation. This is Non-selective voltage-gated ion channel VDAC3 from Oryctolagus cuniculus (Rabbit).